The sequence spans 290 residues: Probable protein phosphatase 2C 20 (290 aa).

The 248-residue stretch at 31 to 278 folds into the PPM-type phosphatase domain; it reads AHGYDFVKGK…DDISCIVPCF (248 aa). D68, G69, D230, and D269 together coordinate Mn(2+).

Belongs to the PP2C family. Mg(2+) serves as cofactor. It depends on Mn(2+) as a cofactor.

The catalysed reaction is O-phospho-L-seryl-[protein] + H2O = L-seryl-[protein] + phosphate. It carries out the reaction O-phospho-L-threonyl-[protein] + H2O = L-threonyl-[protein] + phosphate. May be involved in defense signaling. This chain is Probable protein phosphatase 2C 20 (PPC3-1.2), found in Arabidopsis thaliana (Mouse-ear cress).